A 199-amino-acid chain; its full sequence is MKKLATVGSLIVTSTLVFSSMPFQNAHADTTSMNVSNKQSQNVQNHRPYGGVVPQGMTQAQYTELEKALPQLSAGSNMQDYNMKLYDATQNIADKYNVIITTNVGVFKPHAVRDMNGHALPLTKDGNFYQTNVDANGVNHGGSEMVQNKTGHMSQQGHMNQNTHEPTATHATRSYAIIKPSNDESKSKYAFIKSSNEPK.

The N-terminal stretch at 1-28 (MKKLATVGSLIVTSTLVFSSMPFQNAHA) is a signal peptide.

The protein localises to the secreted. This is an uncharacterized protein from Staphylococcus aureus (strain NCTC 8325 / PS 47).